The following is a 305-amino-acid chain: Glycine--tRNA ligase alpha subunit (305 aa).

The protein belongs to the class-II aminoacyl-tRNA synthetase family. In terms of assembly, tetramer of two alpha and two beta subunits.

It localises to the cytoplasm. The enzyme catalyses tRNA(Gly) + glycine + ATP = glycyl-tRNA(Gly) + AMP + diphosphate. In Streptococcus pneumoniae (strain P1031), this protein is Glycine--tRNA ligase alpha subunit.